Consider the following 299-residue polypeptide: HTH-type transcriptional regulator CynR (299 aa).

In terms of domain architecture, HTH lysR-type spans 1 to 58; sequence MLSRHINYFLAVAEHGSFTRAASALHVSQPALSQQIRQLEESLGVPLFDRSGRTIRLT. The segment at residues 18-37 is a DNA-binding region (H-T-H motif); it reads FTRAASALHVSQPALSQQIR.

Belongs to the LysR transcriptional regulatory family.

The protein resides in the cytoplasm. Its function is as follows. Positively regulates the cynTSX operon, and negatively regulates its own transcription. Binds specifically to the cynR-cynTSX intergenic region. The chain is HTH-type transcriptional regulator CynR (cynR) from Escherichia coli (strain K12).